Reading from the N-terminus, the 333-residue chain is Ketol-acid reductoisomerase (NADP(+)) (333 aa).

Residues 1 to 171 enclose the KARI N-terminal Rossmann domain; the sequence is MSNDTQPTIA…GGARANIIKT (171 aa). Residues 14–17, Arg37, Thr42, and 72–75 contribute to the NADP(+) site; these read YGSQ and DMVQ. Residue His97 is part of the active site. Gly123 provides a ligand contact to NADP(+). The region spanning 172–317 is the KARI C-terminal knotted domain; sequence TFKEETETDL…KKLRAKMVWL (146 aa). Positions 180, 184, 216, and 220 each coordinate Mg(2+). Ser241 lines the substrate pocket.

The protein belongs to the ketol-acid reductoisomerase family. Requires Mg(2+) as cofactor.

The catalysed reaction is (2R)-2,3-dihydroxy-3-methylbutanoate + NADP(+) = (2S)-2-acetolactate + NADPH + H(+). The enzyme catalyses (2R,3R)-2,3-dihydroxy-3-methylpentanoate + NADP(+) = (S)-2-ethyl-2-hydroxy-3-oxobutanoate + NADPH + H(+). It participates in amino-acid biosynthesis; L-isoleucine biosynthesis; L-isoleucine from 2-oxobutanoate: step 2/4. It functions in the pathway amino-acid biosynthesis; L-valine biosynthesis; L-valine from pyruvate: step 2/4. Functionally, involved in the biosynthesis of branched-chain amino acids (BCAA). Catalyzes an alkyl-migration followed by a ketol-acid reduction of (S)-2-acetolactate (S2AL) to yield (R)-2,3-dihydroxy-isovalerate. In the isomerase reaction, S2AL is rearranged via a Mg-dependent methyl migration to produce 3-hydroxy-3-methyl-2-ketobutyrate (HMKB). In the reductase reaction, this 2-ketoacid undergoes a metal-dependent reduction by NADPH to yield (R)-2,3-dihydroxy-isovalerate. This Xanthomonas campestris pv. campestris (strain 8004) protein is Ketol-acid reductoisomerase (NADP(+)).